Reading from the N-terminus, the 439-residue chain is Glutamine synthetase (439 aa).

The GS beta-grasp domain maps to 12 to 93 (RSPKFVQLIF…VYGYIYKDGK (82 aa)). The GS catalytic domain maps to 99–439 (PRGVLKRVIE…EWELERYFFI (341 aa)). Positions 122 and 124 each coordinate Mg(2+). Position 172 (glutamate 172) interacts with ATP. Positions 177 and 184 each coordinate Mg(2+). Glycine 229 contacts L-glutamate. A Mg(2+)-binding site is contributed by histidine 233. ATP contacts are provided by residues 235–237 (HIS) and serine 237. Arginine 283, glutamate 289, and arginine 301 together coordinate L-glutamate. ATP-binding residues include arginine 301 and arginine 306. A Mg(2+)-binding site is contributed by glutamate 318. Arginine 320 provides a ligand contact to L-glutamate.

This sequence belongs to the glutamine synthetase family. As to quaternary structure, oligomer of 12 subunits arranged in the form of two hexagons. The cofactor is Mg(2+).

It is found in the cytoplasm. The enzyme catalyses L-glutamate + NH4(+) + ATP = L-glutamine + ADP + phosphate + H(+). In terms of biological role, probably involved in nitrogen metabolism via ammonium assimilation. Catalyzes the ATP-dependent biosynthesis of glutamine from glutamate and ammonia. The sequence is that of Glutamine synthetase from Pyrococcus abyssi (strain GE5 / Orsay).